The primary structure comprises 426 residues: Glutamate-1-semialdehyde 2,1-aminomutase (426 aa).

N6-(pyridoxal phosphate)lysine is present on K265.

This sequence belongs to the class-III pyridoxal-phosphate-dependent aminotransferase family. HemL subfamily. Homodimer. The cofactor is pyridoxal 5'-phosphate.

It localises to the cytoplasm. The enzyme catalyses (S)-4-amino-5-oxopentanoate = 5-aminolevulinate. The protein operates within porphyrin-containing compound metabolism; protoporphyrin-IX biosynthesis; 5-aminolevulinate from L-glutamyl-tRNA(Glu): step 2/2. The sequence is that of Glutamate-1-semialdehyde 2,1-aminomutase from Alteromonas mediterranea (strain DSM 17117 / CIP 110805 / LMG 28347 / Deep ecotype).